A 356-amino-acid chain; its full sequence is Glutenin, low molecular weight subunit (356 aa).

The first 19 residues, 1 to 19, serve as a signal peptide directing secretion; that stretch reads MKTFLVFALLALAAASAVA. The tract at residues 20–179 is disordered; that stretch reads QISQQQQAPP…LQQQRPPFSR (160 aa).

This sequence belongs to the gliadin/glutenin family. In terms of assembly, disulfide-bridge linked aggregates.

Glutenins are high-molecular weight seed storage proteins of wheat endosperm. Thought to be responsible for the visco-elastic property of wheat dough. This Triticum aestivum (Wheat) protein is Glutenin, low molecular weight subunit.